The sequence spans 686 residues: Translation initiation factor IF-2 (686 aa).

Positions Lys-54–Asp-105 are disordered. Residues Arg-69–Gly-81 show a composition bias toward basic residues. The region spanning Glu-188–Lys-357 is the tr-type G domain. Residues Gly-197–Thr-204 are G1. Gly-197 to Thr-204 provides a ligand contact to GTP. A G2 region spans residues Gly-222 to His-226. The interval Asp-243–Gly-246 is G3. GTP-binding positions include Asp-243 to His-247 and Asn-297 to Asp-300. Residues Asn-297 to Asp-300 are G4. The G5 stretch occupies residues Ser-333–Ile-335.

Belongs to the TRAFAC class translation factor GTPase superfamily. Classic translation factor GTPase family. IF-2 subfamily.

The protein resides in the cytoplasm. One of the essential components for the initiation of protein synthesis. Protects formylmethionyl-tRNA from spontaneous hydrolysis and promotes its binding to the 30S ribosomal subunits. Also involved in the hydrolysis of GTP during the formation of the 70S ribosomal complex. The protein is Translation initiation factor IF-2 of Bacillus anthracis (strain A0248).